Here is a 189-residue protein sequence, read N- to C-terminus: MRKIGIIGGTFDPPHYGHLLIANEVYHALNLEEVWFLPNQIPPHKHGRNITSVESRLQMLELATEEEEHFSICLEELSRKGPSYTYDTMLQLTKKHPDVQFHFIIGGDMVEYLPKWYNIEALLDLVTFVGVARPGYTLHTPYPITTVEIPEFAVSSSLLRERYKEKKTCKYLLPEKVQVYIERNGLYES.

The protein belongs to the NadD family.

It catalyses the reaction nicotinate beta-D-ribonucleotide + ATP + H(+) = deamido-NAD(+) + diphosphate. Its pathway is cofactor biosynthesis; NAD(+) biosynthesis; deamido-NAD(+) from nicotinate D-ribonucleotide: step 1/1. Its function is as follows. Catalyzes the reversible adenylation of nicotinate mononucleotide (NaMN) to nicotinic acid adenine dinucleotide (NaAD). The sequence is that of Probable nicotinate-nucleotide adenylyltransferase from Bacillus cereus (strain AH187).